Reading from the N-terminus, the 879-residue chain is Exocyst complex component 1 (879 aa).

The segment at 29-94 (SQYSESEYDP…ATSLGNNDGD (66 aa)) is disordered. The span at 40-52 (ETTHSESDSENHH) shows a compositional bias: basic and acidic residues. Polar residues predominate over residues 64 to 76 (FLSQSNDNVSNGP). Positions 77 to 91 (SNNTLSSSATSLGNN) are enriched in low complexity. 2 coiled-coil regions span residues 165–187 (YNKQ…NKME) and 226–248 (KGLK…KLKS). 2 disordered regions span residues 371-413 (QNDF…GKDG) and 455-557 (GQRN…PDAP). Residues 373-409 (DFFSSSSSSKKSIDSLNNNTSTSTPSKNSSSSSSSSS) are compositionally biased toward low complexity. Residues 480-500 (KKSSKKDKKDKKDKKDKKDKK) are compositionally biased toward basic residues. Over residues 519-532 (DSNSPKSPNNAVNG) the composition is skewed to polar residues. Residues 541 to 551 (SPPPPPPPPPK) are compositionally biased toward pro residues.

Belongs to the SEC3 family. The exocyst complex is composed of sec3/exoc1, sec5/exoc2, sec6/exoc3, sec8/exoc4, sec10/exoc5, sec15/exoc6, exo70/exoc7 and exo84/exoc8.

Its subcellular location is the midbody. The protein resides in the midbody ring. In terms of biological role, component of the exocyst complex involved in the docking of exocytic vesicles with fusion sites on the plasma membrane. The protein is Exocyst complex component 1 (exoc1) of Dictyostelium discoideum (Social amoeba).